The sequence spans 495 residues: Lysine--tRNA ligase (495 aa).

Mg(2+) contacts are provided by E406 and E413.

This sequence belongs to the class-II aminoacyl-tRNA synthetase family. In terms of assembly, homodimer. Mg(2+) is required as a cofactor.

The protein localises to the cytoplasm. The enzyme catalyses tRNA(Lys) + L-lysine + ATP = L-lysyl-tRNA(Lys) + AMP + diphosphate. This chain is Lysine--tRNA ligase, found in Staphylococcus aureus (strain MRSA252).